The chain runs to 272 residues: Energy-coupling factor transporter ATP-binding protein EcfA1 (272 aa).

An ABC transporter domain is found at isoleucine 5–glutamate 239. Glycine 37–serine 44 is a binding site for ATP. The Proton acceptor role is filled by glutamate 163.

The protein belongs to the ABC transporter superfamily. Energy-coupling factor EcfA family. As to quaternary structure, forms a stable energy-coupling factor (ECF) transporter complex probably composed of 2 membrane-embedded substrate-binding proteins (S component), 2 ATP-binding proteins (A component) and 2 transmembrane proteins (T component). This complex interacts with a number of substrate-specific components, including FolT, PanT and RibU for 5-formyltetrahydrofolate, pantothenate and riboflavin respectively.

Its subcellular location is the cell membrane. In terms of biological role, ATP-binding (A) component of a common energy-coupling factor (ECF) ABC-transporter complex. Unlike classic ABC transporters this ECF transporter provides the energy necessary to transport a number of different substrates including 5-formyltetrahydrofolate, pantothenate and riboflavin. Expression of the complex plus FolT in E.coli allows 5-formyltetrahydrofolate uptake; 5-formyltetrahydrofolate is not taken up in the absence of FolT or the EcfA1A2T complex. The chain is Energy-coupling factor transporter ATP-binding protein EcfA1 from Leuconostoc mesenteroides subsp. mesenteroides (strain ATCC 8293 / DSM 20343 / BCRC 11652 / CCM 1803 / JCM 6124 / NCDO 523 / NBRC 100496 / NCIMB 8023 / NCTC 12954 / NRRL B-1118 / 37Y).